Reading from the N-terminus, the 405-residue chain is Transposase from transposon Tn916 (405 aa).

Residues 79-163 enclose the Core-binding (CB) domain; it reads GKKMTLCQLY…SLKASFYIAI (85 aa). One can recognise a Tyr recombinase domain in the interval 186–392; it reads VPKTVLTEEQ…TFDSAMAEMK (207 aa). Residues R225, K264, H343, R346, and H369 contribute to the active site. The O-(3'-phospho-DNA)-tyrosine intermediate role is filled by Y379.

It belongs to the 'phage' integrase family.

This Enterococcus faecalis (Streptococcus faecalis) protein is Transposase from transposon Tn916 (Int-Tn).